Here is a 290-residue protein sequence, read N- to C-terminus: Elongation factor Ts (290 aa).

The involved in Mg(2+) ion dislocation from EF-Tu stretch occupies residues 82-85 (TDFV).

This sequence belongs to the EF-Ts family.

Its subcellular location is the cytoplasm. In terms of biological role, associates with the EF-Tu.GDP complex and induces the exchange of GDP to GTP. It remains bound to the aminoacyl-tRNA.EF-Tu.GTP complex up to the GTP hydrolysis stage on the ribosome. The chain is Elongation factor Ts from Thiobacillus denitrificans (strain ATCC 25259 / T1).